A 357-amino-acid polypeptide reads, in one-letter code: Ketoreductase CTB6 (357 aa).

An NADP(+)-binding site is contributed by Tyr172.

Belongs to the NAD(P)-dependent epimerase/dehydratase family. Dihydroflavonol-4-reductase subfamily.

Its pathway is mycotoxin biosynthesis. Its function is as follows. Ketoreductase; part of the gene cluster that mediates the biosynthesis of cercosporin, a light-activated, non-host-selective toxin. The perylenequinone chromophore of cercosporin absorbs light energy to attain an electronically-activated triplet state and produces active oxygen species such as the hydroxyl radical, superoxide, hydrogen peroxide or singlet oxygen upon reaction with oxygen molecules. These reactive oxygen species cause damage to various cellular components including lipids, proteins and nucleic acids. The first step of cercosporin biosynthesis is performed by the polyketide synthase CTB1 which catalyzes the formation of nor-toralactone. The starter unit acyltransferase (SAT) domain of CTB1 initiates polyketide extension by the selective utilization of acetyl-CoA, which is elongated to the heptaketide in the beta-ketoacyl synthase (KS) domain by successive condensations with six malonyl units introduced by the malonyl acyltransferase (MAT) domain. The product template (PT) domain catalyzes C4-C9 and C2-C11 aldol cyclizations and dehydrations to a trihydroxynaphthalene, which is thought to be delivered to the thioesterase (TE) domain for product release. The bifunctional enzyme CTB3 then methylates nor-toralactone to toralactone before conducting an unusual oxidative aromatic ring opening. The O-methyltransferase CTB2 further methylates the nascent OH-6 of the CBT3 product, blocking further oxidation at this site before the reductase CTB6 reduces the 2-oxopropyl ketone at position C7, giving naphthalene. The FAD-dependent monooxygenase CTB5 in concert with the multicopper oxidase CTB12 are responsible for homodimerization of naphthalene with CTB7 installing the dioxepine moiety, finally producing cercosporin. The fasciclin domain-containing protein CTB11 might act with CTB5 and CTB12 whereas the roles of CTB9 and CTB10 have still to be elucidated. This Cercospora beticola (Sugarbeet leaf spot fungus) protein is Ketoreductase CTB6.